A 301-amino-acid polypeptide reads, in one-letter code: Acetylglutamate kinase (301 aa).

Substrate contacts are provided by residues 68-69 (GG), Arg-90, and Asn-195.

Belongs to the acetylglutamate kinase family. ArgB subfamily.

Its subcellular location is the cytoplasm. It catalyses the reaction N-acetyl-L-glutamate + ATP = N-acetyl-L-glutamyl 5-phosphate + ADP. The protein operates within amino-acid biosynthesis; L-arginine biosynthesis; N(2)-acetyl-L-ornithine from L-glutamate: step 2/4. Its function is as follows. Catalyzes the ATP-dependent phosphorylation of N-acetyl-L-glutamate. In Ectopseudomonas mendocina (strain ymp) (Pseudomonas mendocina), this protein is Acetylglutamate kinase.